A 392-amino-acid chain; its full sequence is Putative transactivator/viroplasmin protein (392 aa).

Positions 1 to 88 (MEDMMKQILE…NVEEQYQWKN (88 aa)) form a coiled coil. Positions 358–392 (EIEKEEPGEEKNLEDVSTDDNNEKKKIRSVIVKET) are disordered.

It belongs to the caulimoviridae viroplasmin family.

It localises to the host cytoplasm. In terms of biological role, enhances the translation of downstream ORFs on polycistronic mRNAs derived from cassava vein mosaic virus. In Cassava vein mosaic virus (CsVMV), this protein is Putative transactivator/viroplasmin protein.